A 447-amino-acid polypeptide reads, in one-letter code: C4-dicarboxylate transport protein (447 aa).

A run of 10 helical transmembrane segments spans residues 21–41, 57–77, 92–112, 141–161, 163–183, 201–221, 232–252, 320–340, 345–365, and 368–388; these read HLYV…YFAP, LVKM…IAGM, IYFL…VNIV, SLIG…LASG, ILQV…VGEA, LVAI…AYTV, LAML…IVLG, IYMT…LSWG, LLAV…AGFV, and AATL…IFGV.

Belongs to the dicarboxylate/amino acid:cation symporter (DAACS) (TC 2.A.23) family.

It localises to the cell inner membrane. In terms of biological role, responsible for the transport of dicarboxylates such as succinate, fumarate, and malate from the periplasm across the membrane. The sequence is that of C4-dicarboxylate transport protein from Granulibacter bethesdensis (strain ATCC BAA-1260 / CGDNIH1).